Here is a 240-residue protein sequence, read N- to C-terminus: Uridylate kinase (240 aa).

An ATP-binding site is contributed by 13 to 16 (KASG). An involved in allosteric activation by GTP region spans residues 21 to 26 (GSQGFG). Gly55 is a UMP binding site. ATP-binding residues include Gly56 and Arg60. UMP-binding positions include Asp75 and 136–143 (TGNPFFTT). Positions 163, 164, 169, and 172 each coordinate ATP.

Belongs to the UMP kinase family. As to quaternary structure, homohexamer.

It localises to the cytoplasm. The catalysed reaction is UMP + ATP = UDP + ADP. It participates in pyrimidine metabolism; CTP biosynthesis via de novo pathway; UDP from UMP (UMPK route): step 1/1. Allosterically activated by GTP. Inhibited by UTP. In terms of biological role, catalyzes the reversible phosphorylation of UMP to UDP. This is Uridylate kinase from Brucella melitensis biotype 1 (strain ATCC 23456 / CCUG 17765 / NCTC 10094 / 16M).